The primary structure comprises 298 residues: MSGSTLDKGKVTLTGAEETLLITLFARAKDAESPNPVLNDQYSAQVVSRIRDQGYNFSRTTLDRSDSSFFTSLVATRARVLDICCEQFLERNPGPATIIHLACGMDSRSLRLKWQGEGRLWIDADRQDVIKLRRQIMDEPAPERGEYRLTDPDIHDDAWLRDYNVPTDRPVLVLFEGLTPYLTRDEVVSLLRRITNHFRDSGVNGEIRFDAPGSISYFLINYVFNKPLRSMGTQFTWYMDDPRELETHVPGLKYRERMFVLHDYARLGNYGWLAGFLLRVADWFNIGGRIGSGYGYEF.

The protein belongs to the methyltransferase superfamily.

Its pathway is secondary metabolite biosynthesis; terpenoid biosynthesis. S-adenosyl-L-methionine-dependent methyltransferase; part of the gene cluster that mediates the biosynthesis of diterpenoid pyrones. The first step of the pathway is the synthesis of the alpha-pyrone moiety by the polyketide synthase dpfgA via condensation of one acetyl-CoA starter unit with 3 malonyl-CoA units and 2 methylations. The alpha-pyrone is then combined with geranylgeranyl pyrophosphate (GGPP) formed by the GGPP synthase dpfgD through the action of the prenyltransferase dpfgC to yield a linear alpha-pyrone diterpenoid. Subsequent steps in the diterpenoid pyrone biosynthetic pathway involve the decalin core formation, which is initiated by the epoxidation of the C10-C11 olefin by the FAD-dependent oxidoreductase dpfgE, and is followed by a cyclization cascade catalyzed by the terpene cyclase dpfgB. The short chain dehydrogenase/reductase dpfgG then oxidizes the 8S hydroxy group to a ketone and the short chain dehydrogenase/reductase dpfgH reduces the ketone to the 8R hydroxy group to yield higginsianin B. Higginsianin B is further methylated by the methyltransferase dpfgI to produce the intermediate named FDDP B. The cytochrome P450 monooxygenase dfgpJ then catalyzes a three-step oxidation at C-27 to generate a carboxylic acid as well as C-26 hydroxylation. Finally, methyltransferase dpfgK methylates the carboxylic acid generated by dpfgJ, yielding the final diterpenoid pyrones from the pathway which were named FDDP D and FDDP E. This chain is S-adenosyl-L-methionine-dependent methyltransferase dpfgK, found in Gibberella zeae (strain ATCC MYA-4620 / CBS 123657 / FGSC 9075 / NRRL 31084 / PH-1) (Wheat head blight fungus).